Reading from the N-terminus, the 303-residue chain is Probable cell division protein WhiA (303 aa).

Residues 272–303 (SIQQIADSIEPPLTKSGVNHRLRKINKIADDL) constitute a DNA-binding region (H-T-H motif).

It belongs to the WhiA family.

Functionally, involved in cell division and chromosome segregation. The polypeptide is Probable cell division protein WhiA (Streptococcus thermophilus (strain ATCC BAA-250 / LMG 18311)).